The chain runs to 534 residues: Nitrate/nitrite transporter NrtP (534 aa).

The next 12 helical transmembrane spans lie at 19–39, 52–72, 79–99, 109–129, 150–170, 195–215, 240–260, 266–286, 382–404, 409–431, 445–465, and 485–505; these read WFAF…ATTI, TIGL…GMLL, LTYS…ATAQ, LLMG…AEWF, AFSA…PGAF, AAIA…YFSV, DFWF…VLAW, NFLN…LYLF, WTMV…VAGT, IAVL…TFAI, GNVG…LLLL, and GFFQ…AFFL.

Belongs to the major facilitator superfamily. Nitrate/nitrite porter (TC 2.A.1.8) family.

It is found in the cell inner membrane. Its function is as follows. High-efficiency transport system for both nitrate and nitrite. The polypeptide is Nitrate/nitrite transporter NrtP (Picosynechococcus sp. (strain ATCC 27264 / PCC 7002 / PR-6) (Agmenellum quadruplicatum)).